Consider the following 336-residue polypeptide: Fructose-1,6-bisphosphatase class 1 (336 aa).

Mg(2+)-binding residues include Glu-90, Asp-112, Leu-114, and Asp-115. Substrate-binding positions include 115 to 118 (DGSS), Asn-207, and Lys-273. Glu-279 contributes to the Mg(2+) binding site.

Belongs to the FBPase class 1 family. Homotetramer. Mg(2+) serves as cofactor.

It localises to the cytoplasm. It catalyses the reaction beta-D-fructose 1,6-bisphosphate + H2O = beta-D-fructose 6-phosphate + phosphate. Its pathway is carbohydrate biosynthesis; gluconeogenesis. The chain is Fructose-1,6-bisphosphatase class 1 from Xanthomonas axonopodis pv. citri (strain 306).